Here is a 394-residue protein sequence, read N- to C-terminus: Elongation factor Tu (394 aa).

In terms of domain architecture, tr-type G spans 10-204; that stretch reads KPHVNIGTIG…AVDSYIPQPV (195 aa). Positions 19–26 are G1; that stretch reads GHVDHGKT. 19–26 lines the GTP pocket; sequence GHVDHGKT. T26 is a Mg(2+) binding site. The G2 stretch occupies residues 60 to 64; that stretch reads GITIS. The interval 81–84 is G3; sequence DCPG. GTP contacts are provided by residues 81-85 and 136-139; these read DCPGH and NKVD. The segment at 136-139 is G4; that stretch reads NKVD. A G5 region spans residues 174–176; it reads SAL.

The protein belongs to the TRAFAC class translation factor GTPase superfamily. Classic translation factor GTPase family. EF-Tu/EF-1A subfamily. As to quaternary structure, monomer.

The protein resides in the cytoplasm. It carries out the reaction GTP + H2O = GDP + phosphate + H(+). In terms of biological role, GTP hydrolase that promotes the GTP-dependent binding of aminoacyl-tRNA to the A-site of ribosomes during protein biosynthesis. The polypeptide is Elongation factor Tu (Rickettsia helvetica).